Consider the following 506-residue polypeptide: Ribose import ATP-binding protein RbsA 2 (506 aa).

ABC transporter domains follow at residues 6–241 and 254–499; these read LSMT…VGRV and EKSN…SITI. Position 38–45 (38–45) interacts with ATP; it reads GENGAGKS.

The protein belongs to the ABC transporter superfamily. Ribose importer (TC 3.A.1.2.1) family. As to quaternary structure, the complex is composed of an ATP-binding protein (RbsA), two transmembrane proteins (RbsC) and a solute-binding protein (RbsB).

It is found in the cell inner membrane. It carries out the reaction D-ribose(out) + ATP + H2O = D-ribose(in) + ADP + phosphate + H(+). Part of the ABC transporter complex RbsABC involved in ribose import. Responsible for energy coupling to the transport system. In Agrobacterium fabrum (strain C58 / ATCC 33970) (Agrobacterium tumefaciens (strain C58)), this protein is Ribose import ATP-binding protein RbsA 2.